Reading from the N-terminus, the 224-residue chain is Menaquinol:cytochrome c reductase cytochrome b subunit (224 aa).

A helical membrane pass occupies residues 37 to 57; that stretch reads FSAFVYCFGGLTFFVTVIQVL. Tyrosine 42 contacts heme b. Cysteine 43 provides a ligand contact to heme c. Residues arginine 91, histidine 94, histidine 108, and arginine 111 each contribute to the heme b site. Helical transmembrane passes span 96 to 116, 126 to 146, and 195 to 215; these read WGAS…FFQG, WIVG…GYLL, and IHVF…FIMI. Residues histidine 196 and histidine 211 each coordinate heme b. Arginine 216 and isoleucine 220 together coordinate heme c. Residue serine 221 participates in heme b binding.

It belongs to the cytochrome b family. As to quaternary structure, the main subunits of the menaquinol:cytochrome c complex are a Rieske-type iron-sulfur protein (QcrA), a cytochrome b (QcrB) and a cytochrome c (QcrC). Requires heme b as cofactor. The cofactor is heme c.

It is found in the cell membrane. Component of the menaquinol:cytochrome c reductase complex. This Bacillus subtilis (strain 168) protein is Menaquinol:cytochrome c reductase cytochrome b subunit.